We begin with the raw amino-acid sequence, 198 residues long: Imidazoleglycerol-phosphate dehydratase (198 aa).

Belongs to the imidazoleglycerol-phosphate dehydratase family.

Its subcellular location is the cytoplasm. It catalyses the reaction D-erythro-1-(imidazol-4-yl)glycerol 3-phosphate = 3-(imidazol-4-yl)-2-oxopropyl phosphate + H2O. Its pathway is amino-acid biosynthesis; L-histidine biosynthesis; L-histidine from 5-phospho-alpha-D-ribose 1-diphosphate: step 6/9. The polypeptide is Imidazoleglycerol-phosphate dehydratase (Methylobacillus flagellatus (strain ATCC 51484 / DSM 6875 / VKM B-1610 / KT)).